Consider the following 1178-residue polypeptide: Zinc finger CCHC domain-containing protein 2 (1178 aa).

Disordered regions lie at residues 1–90 (MLRM…GPSA), 207–249 (AARG…RVGG), 557–683 (VTSA…SVNQ), and 936–986 (LSTA…SDST). The segment covering 43 to 67 (PPPPPPPPAGPSRGPLPPPPPPRGL) has biased composition (pro residues). Gly residues predominate over residues 75 to 88 (AAAGAGMPGGGGGP). The span at 208–219 (ARGEGSRGGAED) shows a compositional bias: basic and acidic residues. The span at 220–229 (ERGEDGDGEQ) shows a compositional bias: acidic residues. Ser-236 is subject to Phosphoserine. The segment covering 580-594 (PQTEKEKIKKTDNRL) has biased composition (basic and acidic residues). Over residues 595 to 607 (NSRINGIRLSTPQ) the composition is skewed to polar residues. Over residues 632–641 (SSESYSSPSS) the composition is skewed to low complexity. Over residues 642–661 (PRHDGRESFESEEEKDRDTD) the composition is skewed to basic and acidic residues. The segment covering 665–683 (EDSGNPSTTRFTGYGSVNQ) has biased composition (polar residues). Low complexity predominate over residues 937–948 (STAATSPQPASA). Residues 959-973 (PAVPTHTPGPAPSPS) are compositionally biased toward pro residues. The span at 974 to 986 (PALTHSTAQSDST) shows a compositional bias: polar residues. A CCHC-type zinc finger spans residues 1131–1148 (VSCYNCGVSGHYAQDCKQ).

The protein is Zinc finger CCHC domain-containing protein 2 of Homo sapiens (Human).